The chain runs to 1063 residues: Unconventional myosin-Ic (1063 aa).

The residue at position 1 (Met-1) is an N-acetylmethionine. A Phosphoserine modification is found at Thr-10. The Myosin motor domain occupies Gly-47–Glu-731. ATP-binding positions include Asn-88, Tyr-96, Ser-139–Glu-148, and Asn-192–Ser-196. Lys-383 is modified (N6-methyllysine). The residue at position 408 (Ser-408) is a Phosphoserine. N6-acetyllysine is present on Lys-486. Ser-536 carries the phosphoserine modification. The segment at Leu-608–Asp-630 is actin-binding. IQ domains are found at residues Arg-734 to Val-757 and Lys-758 to Thr-786. 2 positions are modified to phosphoserine: Ser-864 and Ser-1041. Residues Lys-885–Arg-1059 form the TH1 domain.

The protein belongs to the TRAFAC class myosin-kinesin ATPase superfamily. Myosin family. In terms of assembly, interacts (via its IQ motifs) with CABP1 and CIB1; the interaction with CABP1 and CIB1 is calcium-dependent. Interacts (via tail domain) with PLEKHB1 (via PH domain); the interaction is not affected by the presence or absence of calcium and CALM. Interacts with POLR1A. Interacts with POLR2A. Component of the B-WICH complex, at least composed of SMARCA5/SNF2H, BAZ1B/WSTF, SF3B1, DEK, MYO1C, ERCC6, MYBBP1A and DDX21. Interacts (via its IQ motifs) with CALM; this precludes interaction with YWHAB. Interacts with YWHAB; this precludes interaction with CALM. Interacts with RPS6. Interacts with actin. Interacts with LLPH. Interacts with GLUT4. Interacts (via its IQ motifs) with SH3BGRL3; the interaction is dependent on calcium and takes place at membrane ruffles. In terms of processing, isoform 2 contains a N-acetylmethionine at position 1. As to expression, isoform 3 is expressed in small intestine, pancreas, brain, kidney, skin, heart muscle, testis, striated muscle, spleen, liver and lung (at protein level). Expressed in brain, testis, adrenal glands, thymus, spleen, kidney, lung, heart, cochlea and vestibule. Expressed in sensory hair cells of the inner ear. Expressed in adipocytes.

The protein localises to the cytoplasm. The protein resides in the nucleus. It localises to the cell cortex. Its subcellular location is the cell projection. It is found in the stereocilium membrane. The protein localises to the cytoplasmic vesicle. The protein resides in the ruffle membrane. It localises to the nucleolus. Its subcellular location is the nucleoplasm. Its function is as follows. Myosins are actin-based motor molecules with ATPase activity. Unconventional myosins serve in intracellular movements. Their highly divergent tails bind to membranous compartments, which then are moved relative to actin filaments. Involved in glucose transporter recycling in response to insulin by regulating movement of intracellular GLUT4-containing vesicles to the plasma membrane. Component of the hair cell's (the sensory cells of the inner ear) adaptation-motor complex. Acts as a mediator of adaptation of mechanoelectrical transduction in stereocilia of vestibular hair cells. Binds phosphoinositides and links the actin cytoskeleton to cellular membranes. In terms of biological role, involved in regulation of transcription. Associated with transcriptional active ribosomal genes. Appears to cooperate with the WICH chromatin-remodeling complex to facilitate transcription. Necessary for the formation of the first phosphodiester bond during transcription initiation. This chain is Unconventional myosin-Ic (Myo1c), found in Mus musculus (Mouse).